Consider the following 230-residue polypeptide: ATP synthase subunit a (230 aa).

5 consecutive transmembrane segments (helical) span residues 17–37 (LPITQSVLTTWFIMISLFIMA), 78–98 (IFPFVATLWIFILVSNLIGVI), 107–127 (DLSVTASLAIMTFLSVHWFGI), 165–187 (LFGNIMSLQLTALIVLMIAGFLV), and 198–218 (EAIIQAYIFGMLALIYIAGGI).

Belongs to the ATPase A chain family. In terms of assembly, F-type ATPases have 2 components, CF(1) - the catalytic core - and CF(0) - the membrane proton channel. CF(1) has five subunits: alpha(3), beta(3), gamma(1), delta(1), epsilon(1). CF(0) has three main subunits: a(1), b(2) and c(9-12). The alpha and beta chains form an alternating ring which encloses part of the gamma chain. CF(1) is attached to CF(0) by a central stalk formed by the gamma and epsilon chains, while a peripheral stalk is formed by the delta and b chains.

The protein localises to the cell inner membrane. Key component of the proton channel; it plays a direct role in the translocation of protons across the membrane. In Legionella pneumophila subsp. pneumophila (strain Philadelphia 1 / ATCC 33152 / DSM 7513), this protein is ATP synthase subunit a.